A 278-amino-acid chain; its full sequence is Translation initiation factor IF-3, mitochondrial (278 aa).

A mitochondrion-targeting transit peptide spans 1–31 (MAALFLKRLTLQTVKSENSCIRCFGKHILQK). The disordered stretch occupies residues 249–278 (KAYKETQETQERDTLNKDHGNDKESNVLHQ).

Belongs to the IF-3 family.

The protein localises to the mitochondrion. In terms of biological role, IF-3 binds to the 28S ribosomal subunit and shifts the equilibrium between 55S ribosomes and their 39S and 28S subunits in favor of the free subunits, thus enhancing the availability of 28S subunits on which protein synthesis initiation begins. In Homo sapiens (Human), this protein is Translation initiation factor IF-3, mitochondrial (MTIF3).